The sequence spans 286 residues: E3 SUMO-protein ligase K-bZIP (286 aa).

Disordered stretches follow at residues 1-22 and 106-130; these read MPRM…EKDE and WTLS…SKRR.

As to quaternary structure, interacts with host HDAC1 and HDAC2, these interactions suppress HDAC activities. Interacts with protein ORF57. Interacts with protein vPK. Post-translationally, sumoylated.

It participates in protein modification; protein sumoylation. In terms of biological role, SUMO E3 ligase that plays a role in viral gene regulation and is essential for viral reactivation. Disrupts host G1 cell cycle control thus allowing viral transcription and translation to proceed at the early stages of infection. Catalyzes its own SUMO modification as well as that of its interacting partners such as host TP53 and RB1. Regulates viral gene expression and reactivation and may mediate the SUMOylation of viral promoters in the low methylated 'Lys-9' histone H3 (H3K9me) region which results in a diminution of viral gene expression after reactivation. SUMOylates also host histone lysine demethylase 4A/KDM4A, an essential step for complete enrichment of SUMO-2/3 on the viral genome during viral transactivation and reactivation. This is E3 SUMO-protein ligase K-bZIP (K8) from Human herpesvirus 8 type P (isolate GK18) (HHV-8).